The following is a 357-amino-acid chain: Anthranilate phosphoribosyltransferase (357 aa).

5-phospho-alpha-D-ribose 1-diphosphate is bound by residues G91, 94-95 (GD), T99, 101-104 (NIST), 119-127 (KHGNRSVSS), and S131. G91 contributes to the anthranilate binding site. S103 is a Mg(2+) binding site. N122 is an anthranilate binding site. R177 contributes to the anthranilate binding site. D235 and E236 together coordinate Mg(2+).

Belongs to the anthranilate phosphoribosyltransferase family. As to quaternary structure, homodimer. Mg(2+) is required as a cofactor.

The catalysed reaction is N-(5-phospho-beta-D-ribosyl)anthranilate + diphosphate = 5-phospho-alpha-D-ribose 1-diphosphate + anthranilate. It participates in amino-acid biosynthesis; L-tryptophan biosynthesis; L-tryptophan from chorismate: step 2/5. Functionally, catalyzes the transfer of the phosphoribosyl group of 5-phosphorylribose-1-pyrophosphate (PRPP) to anthranilate to yield N-(5'-phosphoribosyl)-anthranilate (PRA). The chain is Anthranilate phosphoribosyltransferase from Shewanella baltica (strain OS185).